The primary structure comprises 292 residues: Phosphoribosylaminoimidazole-succinocarboxamide synthase (292 aa).

It belongs to the SAICAR synthetase family.

The catalysed reaction is 5-amino-1-(5-phospho-D-ribosyl)imidazole-4-carboxylate + L-aspartate + ATP = (2S)-2-[5-amino-1-(5-phospho-beta-D-ribosyl)imidazole-4-carboxamido]succinate + ADP + phosphate + 2 H(+). It participates in purine metabolism; IMP biosynthesis via de novo pathway; 5-amino-1-(5-phospho-D-ribosyl)imidazole-4-carboxamide from 5-amino-1-(5-phospho-D-ribosyl)imidazole-4-carboxylate: step 1/2. This chain is Phosphoribosylaminoimidazole-succinocarboxamide synthase, found in Elusimicrobium minutum (strain Pei191).